The chain runs to 234 residues: Leucyl/phenylalanyl-tRNA--protein transferase (234 aa).

This sequence belongs to the L/F-transferase family.

The protein resides in the cytoplasm. The catalysed reaction is N-terminal L-lysyl-[protein] + L-leucyl-tRNA(Leu) = N-terminal L-leucyl-L-lysyl-[protein] + tRNA(Leu) + H(+). It carries out the reaction N-terminal L-arginyl-[protein] + L-leucyl-tRNA(Leu) = N-terminal L-leucyl-L-arginyl-[protein] + tRNA(Leu) + H(+). The enzyme catalyses L-phenylalanyl-tRNA(Phe) + an N-terminal L-alpha-aminoacyl-[protein] = an N-terminal L-phenylalanyl-L-alpha-aminoacyl-[protein] + tRNA(Phe). In terms of biological role, functions in the N-end rule pathway of protein degradation where it conjugates Leu, Phe and, less efficiently, Met from aminoacyl-tRNAs to the N-termini of proteins containing an N-terminal arginine or lysine. The sequence is that of Leucyl/phenylalanyl-tRNA--protein transferase from Shigella sonnei (strain Ss046).